The sequence spans 257 residues: tRNA uridine(34) hydroxylase (257 aa).

Residues 128-222 enclose the Rhodanese domain; that stretch reads NGRRLVMLDA…YFEQVGGEGY (95 aa). Catalysis depends on C182, which acts as the Cysteine persulfide intermediate.

This sequence belongs to the TrhO family.

The enzyme catalyses uridine(34) in tRNA + AH2 + O2 = 5-hydroxyuridine(34) in tRNA + A + H2O. Catalyzes oxygen-dependent 5-hydroxyuridine (ho5U) modification at position 34 in tRNAs. The chain is tRNA uridine(34) hydroxylase from Xylella fastidiosa (strain M23).